A 262-amino-acid chain; its full sequence is Acyl-[acyl-carrier-protein]--UDP-N-acetylglucosamine O-acyltransferase (262 aa).

Belongs to the transferase hexapeptide repeat family. LpxA subfamily. Homotrimer.

Its subcellular location is the cytoplasm. It carries out the reaction a (3R)-hydroxyacyl-[ACP] + UDP-N-acetyl-alpha-D-glucosamine = a UDP-3-O-[(3R)-3-hydroxyacyl]-N-acetyl-alpha-D-glucosamine + holo-[ACP]. It functions in the pathway glycolipid biosynthesis; lipid IV(A) biosynthesis; lipid IV(A) from (3R)-3-hydroxytetradecanoyl-[acyl-carrier-protein] and UDP-N-acetyl-alpha-D-glucosamine: step 1/6. Functionally, involved in the biosynthesis of lipid A, a phosphorylated glycolipid that anchors the lipopolysaccharide to the outer membrane of the cell. This is Acyl-[acyl-carrier-protein]--UDP-N-acetylglucosamine O-acyltransferase from Salmonella typhi.